The primary structure comprises 153 residues: 6,7-dimethyl-8-ribityllumazine synthase (153 aa).

5-amino-6-(D-ribitylamino)uracil contacts are provided by residues F21, 55–57 (AFE), and 79–81 (TVI). A (2S)-2-hydroxy-3-oxobutyl phosphate-binding site is contributed by 84–85 (AT). H87 acts as the Proton donor in catalysis. F112 serves as a coordination point for 5-amino-6-(D-ribitylamino)uracil. R126 contributes to the (2S)-2-hydroxy-3-oxobutyl phosphate binding site.

The protein belongs to the DMRL synthase family. Forms an icosahedral capsid composed of 60 subunits, arranged as a dodecamer of pentamers.

It catalyses the reaction (2S)-2-hydroxy-3-oxobutyl phosphate + 5-amino-6-(D-ribitylamino)uracil = 6,7-dimethyl-8-(1-D-ribityl)lumazine + phosphate + 2 H2O + H(+). It participates in cofactor biosynthesis; riboflavin biosynthesis; riboflavin from 2-hydroxy-3-oxobutyl phosphate and 5-amino-6-(D-ribitylamino)uracil: step 1/2. Functionally, catalyzes the formation of 6,7-dimethyl-8-ribityllumazine by condensation of 5-amino-6-(D-ribitylamino)uracil with 3,4-dihydroxy-2-butanone 4-phosphate. This is the penultimate step in the biosynthesis of riboflavin. In Bacillus cereus (strain 03BB102), this protein is 6,7-dimethyl-8-ribityllumazine synthase.